Consider the following 229-residue polypeptide: MANPTHLGFQDAMSPLMEELLYFHDHTLMILFLISSLVFYMIFALLFPKLYYPNTSDVQEVEVIWTVLPAIVLISIALPSLRTLYLMDETNNPCLTIKVTGHQWYWSYEYTDFSTLEFDSYMIPTQDLPQGHFRLLEVDHRMITPTNSTIRVLITAEDVLHSWAIPSIGTKMDAVPGRLNQVMITLANPGVFYGQCSEICGANHSFMPITMETIPLNHFQLWLEDSILS.

Topologically, residues 1-14 (MANPTHLGFQDAMS) are mitochondrial intermembrane. Residues 15-45 (PLMEELLYFHDHTLMILFLISSLVFYMIFAL) form a helical membrane-spanning segment. Residues 46 to 59 (LFPKLYYPNTSDVQ) lie on the Mitochondrial matrix side of the membrane. Residues 60–87 (EVEVIWTVLPAIVLISIALPSLRTLYLM) traverse the membrane as a helical segment. Residues 88-229 (DETNNPCLTI…QLWLEDSILS (142 aa)) lie on the Mitochondrial intermembrane side of the membrane. Cu cation-binding residues include His161, Cys196, Glu198, Cys200, His204, and Met207. Residue Glu198 coordinates Mg(2+).

It belongs to the cytochrome c oxidase subunit 2 family. Component of the cytochrome c oxidase (complex IV, CIV), a multisubunit enzyme composed of 14 subunits. The complex is composed of a catalytic core of 3 subunits MT-CO1, MT-CO2 and MT-CO3, encoded in the mitochondrial DNA, and 11 supernumerary subunits COX4I, COX5A, COX5B, COX6A, COX6B, COX6C, COX7A, COX7B, COX7C, COX8 and NDUFA4, which are encoded in the nuclear genome. The complex exists as a monomer or a dimer and forms supercomplexes (SCs) in the inner mitochondrial membrane with NADH-ubiquinone oxidoreductase (complex I, CI) and ubiquinol-cytochrome c oxidoreductase (cytochrome b-c1 complex, complex III, CIII), resulting in different assemblies (supercomplex SCI(1)III(2)IV(1) and megacomplex MCI(2)III(2)IV(2)). Found in a complex with TMEM177, COA6, COX18, COX20, SCO1 and SCO2. Interacts with TMEM177 in a COX20-dependent manner. Interacts with COX20. Interacts with COX16. Cu cation serves as cofactor.

It is found in the mitochondrion inner membrane. The catalysed reaction is 4 Fe(II)-[cytochrome c] + O2 + 8 H(+)(in) = 4 Fe(III)-[cytochrome c] + 2 H2O + 4 H(+)(out). Component of the cytochrome c oxidase, the last enzyme in the mitochondrial electron transport chain which drives oxidative phosphorylation. The respiratory chain contains 3 multisubunit complexes succinate dehydrogenase (complex II, CII), ubiquinol-cytochrome c oxidoreductase (cytochrome b-c1 complex, complex III, CIII) and cytochrome c oxidase (complex IV, CIV), that cooperate to transfer electrons derived from NADH and succinate to molecular oxygen, creating an electrochemical gradient over the inner membrane that drives transmembrane transport and the ATP synthase. Cytochrome c oxidase is the component of the respiratory chain that catalyzes the reduction of oxygen to water. Electrons originating from reduced cytochrome c in the intermembrane space (IMS) are transferred via the dinuclear copper A center (CU(A)) of subunit 2 and heme A of subunit 1 to the active site in subunit 1, a binuclear center (BNC) formed by heme A3 and copper B (CU(B)). The BNC reduces molecular oxygen to 2 water molecules using 4 electrons from cytochrome c in the IMS and 4 protons from the mitochondrial matrix. In Alligator mississippiensis (American alligator), this protein is Cytochrome c oxidase subunit 2 (MT-CO2).